A 178-amino-acid chain; its full sequence is Single-stranded DNA-binding protein DdrB (178 aa).

The tract at residues 139–178 (RYAVPGSNRPQAGAPARSAATRAQGARPGAVAVQDEETPF) is disordered. The span at 147–165 (RPQAGAPARSAATRAQGAR) shows a compositional bias: low complexity.

In terms of assembly, homopentamer; arranged in a ring-structure.

SsDNA-binding protein that probably contributes to the ionizing radiation resistance of D.geothermalis. Plays a role in DNA repair and genome reconstitution, in a RecA-independent process, and is necessary for recovery from severe genomic fragmentation as a result of exposure to severe levels of ionizing radiation. Binds single-stranded DNA but not duplex DNA. This Deinococcus geothermalis (strain DSM 11300 / CIP 105573 / AG-3a) protein is Single-stranded DNA-binding protein DdrB (ddrB).